A 441-amino-acid polypeptide reads, in one-letter code: Glutamyl-tRNA reductase (441 aa).

Substrate-binding positions include 49–52 (TCNR), Ser-109, 114–116 (EDQ), and Gln-120. The active-site Nucleophile is the Cys-50. 190–195 (GAGKMS) lines the NADP(+) pocket.

It belongs to the glutamyl-tRNA reductase family. As to quaternary structure, homodimer.

The enzyme catalyses (S)-4-amino-5-oxopentanoate + tRNA(Glu) + NADP(+) = L-glutamyl-tRNA(Glu) + NADPH + H(+). Its pathway is porphyrin-containing compound metabolism; protoporphyrin-IX biosynthesis; 5-aminolevulinate from L-glutamyl-tRNA(Glu): step 1/2. In terms of biological role, catalyzes the NADPH-dependent reduction of glutamyl-tRNA(Glu) to glutamate 1-semialdehyde (GSA). The chain is Glutamyl-tRNA reductase from Moorella thermoacetica (strain ATCC 39073 / JCM 9320).